Consider the following 158-residue polypeptide: Ribosome maturation factor RimP (158 aa).

The protein belongs to the RimP family.

The protein localises to the cytoplasm. Its function is as follows. Required for maturation of 30S ribosomal subunits. This Pseudomonas syringae pv. tomato (strain ATCC BAA-871 / DC3000) protein is Ribosome maturation factor RimP.